A 123-amino-acid polypeptide reads, in one-letter code: Peptide methionine sulfoxide reductase MsrA (123 aa).

Residue Cys8 is part of the active site.

This sequence belongs to the MsrA Met sulfoxide reductase family.

The catalysed reaction is L-methionyl-[protein] + [thioredoxin]-disulfide + H2O = L-methionyl-(S)-S-oxide-[protein] + [thioredoxin]-dithiol. It carries out the reaction [thioredoxin]-disulfide + L-methionine + H2O = L-methionine (S)-S-oxide + [thioredoxin]-dithiol. In terms of biological role, has an important function as a repair enzyme for proteins that have been inactivated by oxidation. Catalyzes the reversible oxidation-reduction of methionine sulfoxide in proteins to methionine. The sequence is that of Peptide methionine sulfoxide reductase MsrA from Thermoactinomyces vulgaris.